We begin with the raw amino-acid sequence, 443 residues long: Probable D-serine dehydratase (443 aa).

Residue K116 is modified to N6-(pyridoxal phosphate)lysine.

This sequence belongs to the serine/threonine dehydratase family. DsdA subfamily. The cofactor is pyridoxal 5'-phosphate.

It catalyses the reaction D-serine = pyruvate + NH4(+). The sequence is that of Probable D-serine dehydratase from Bacillus cereus (strain AH187).